We begin with the raw amino-acid sequence, 283 residues long: Serine protease 57 (283 aa).

The signal sequence occupies residues methionine 1–glycine 31. A Peptidase S1 domain is found at isoleucine 34–arginine 263. Cysteine 59 and cysteine 75 are joined by a disulfide. Active-site charge relay system residues include histidine 74 and aspartate 122. N-linked (GlcNAc...) asparagine glycans are attached at residues asparagine 129 and asparagine 189. Cystine bridges form between cysteine 157/cysteine 224, cysteine 188/cysteine 202, and cysteine 214/cysteine 239. Residue serine 218 is the Charge relay system of the active site.

The protein belongs to the peptidase S1 family. After cleavage of the signal peptide, the N-terminus is probably further processed by CTSC. Processing by CTSC is probably required for accumulation in cytoplasmic granules; in the absence of CTSC the protein does not accumulate. Post-translationally, N-glycosylated. As to expression, detected in peripheral blood neutrophil granulocytes, but not in other types of leukocytes. Detected in neutrophils and neutrophil precursors in bone marrow (at protein level). Detected in myeloblasts and promyelocytes in bone marrow.

It is found in the cytoplasmic granule lumen. It localises to the secreted. With respect to regulation, inhibited by SERPINA1, SERPINC1 and SERPING1. Its function is as follows. Serine protease that cleaves preferentially after Arg residues. Can also cleave after citrulline (deimidated arginine) and methylarginine residues. This is Serine protease 57 (PRSS57) from Homo sapiens (Human).